The primary structure comprises 318 residues: Pantothenate kinase (318 aa).

G96 to S103 is an ATP binding site.

This sequence belongs to the prokaryotic pantothenate kinase family.

The protein resides in the cytoplasm. It carries out the reaction (R)-pantothenate + ATP = (R)-4'-phosphopantothenate + ADP + H(+). Its pathway is cofactor biosynthesis; coenzyme A biosynthesis; CoA from (R)-pantothenate: step 1/5. The chain is Pantothenate kinase from Coxiella burnetii (strain RSA 493 / Nine Mile phase I).